We begin with the raw amino-acid sequence, 515 residues long: Protein translocase subunit SecD (515 aa).

The helical transmembrane segment at 6–26 (LYSLIFIIILTAFAVWVDLPG) threads the bilayer. A disordered region spans residues 141-186 (AITNGNQNQNSTKNGTPTPGTTPTPESTPQANQTPVAANVTPTPED). Residues 150–169 (NSTKNGTPTPGTTPTPESTP) show a composition bias toward low complexity. A compositionally biased stretch (polar residues) spans 170–186 (QANQTPVAANVTPTPED). The next 5 helical transmembrane spans lie at 322–342 (RSIR…ILYY), 344–364 (LPGF…FALF), 367–387 (IPVT…GMAV), 427–447 (ISTL…GASV), and 450–470 (GFAI…IFVT).

This sequence belongs to the SecD/SecF family. SecD subfamily. In terms of assembly, forms a complex with SecF. Part of the essential Sec protein translocation apparatus which comprises SecA, SecYEG and auxiliary proteins SecDF. Other proteins may also be involved.

The protein localises to the cell membrane. Part of the Sec protein translocase complex. Interacts with the SecYEG preprotein conducting channel. SecDF uses the proton motive force (PMF) to complete protein translocation after the ATP-dependent function of SecA. The chain is Protein translocase subunit SecD from Thermobaculum terrenum (strain ATCC BAA-798 / CCMEE 7001 / YNP1).